The sequence spans 238 residues: Large ribosomal subunit protein uL1 (238 aa).

It belongs to the universal ribosomal protein uL1 family. In terms of assembly, part of the 50S ribosomal subunit.

Binds directly to 23S rRNA. The L1 stalk is quite mobile in the ribosome, and is involved in E site tRNA release. In terms of biological role, protein L1 is also a translational repressor protein, it controls the translation of the L11 operon by binding to its mRNA. The polypeptide is Large ribosomal subunit protein uL1 (Trichormus variabilis (strain ATCC 29413 / PCC 7937) (Anabaena variabilis)).